Reading from the N-terminus, the 252-residue chain is MPTLMYLQEMIRMHAKDKIIVALDVPDLAAGEKLVDRLSPYAGMFKVGLEFFTAAGPAAVRMVKERGGRVFADLKFHDIPNTVAGAARALVRLGVDMLNVHAAGGKAMLQAAAAAVREEAAALNRPAPVIIAVTVLTSLDREALRCEVGIEREVEEQVARWALLAREAGLDGVVASPREIRAIREACGPEFVIVTPGVRPAGSDRGDQRRVMTPAEALREGASYLVIGRPITAAPDPVAAARAIAAEIEMVK.

Substrate is bound by residues Asp24, Lys46, 73 to 82 (DLKFHDIPNT), Thr137, Arg199, Gln208, Gly228, and Arg229. The active-site Proton donor is the Lys75.

Belongs to the OMP decarboxylase family. Type 1 subfamily. In terms of assembly, homodimer.

The enzyme catalyses orotidine 5'-phosphate + H(+) = UMP + CO2. It functions in the pathway pyrimidine metabolism; UMP biosynthesis via de novo pathway; UMP from orotate: step 2/2. Its function is as follows. Catalyzes the decarboxylation of orotidine 5'-monophosphate (OMP) to uridine 5'-monophosphate (UMP). The sequence is that of Orotidine 5'-phosphate decarboxylase from Moorella thermoacetica (strain ATCC 39073 / JCM 9320).